The primary structure comprises 204 residues: Protein PAXX (204 aa).

In terms of domain architecture, PISA spans 37-79 (FNLYVTDAAELWSTCFTPDSLAALKARFGLSAAEDITPRFRAA). Residue Ser-134 is modified to Phosphoserine. Residues 143–204 (EETAVSPRKS…PAGGVDFDET (62 aa)) are disordered. Thr-145 is modified (phosphothreonine). A phosphoserine mark is found at Ser-148 and Ser-152. The segment at 171-204 (GPGPGVRRRCPGESLINPGFKSKKPAGGVDFDET) is mediates interaction with XRCC5/Ku80 and XRCC6/Ku70 and association with the non-homologous end joining core complex. Residues 190-204 (FKSKKPAGGVDFDET) carry the XLM motif.

The protein belongs to the XRCC4-XLF family. PAXX subfamily. Homodimer. Interacts with the DNA-bound XRCC5/Ku80 and XRCC6/Ku70 heterodimer (Ku complex); the interaction is direct. Associated component of the non-homologous end joining (NHEJ) complex, composed of the core proteins PRKDC, LIG4, XRCC4, XRCC6/Ku70, XRCC5/Ku86 and NHEJ1/XLF. Interacts with POLL (DNA polymerase lambda); promoting POLL recruitment to double-strand breaks (DSBs) and stimulation of the end-filling activity of POLL. In terms of processing, phosphorylation may inhibit interaction with the DNA-bound XRCC5/Ku80 and XRCC6/Ku70 heterodimer (Ku complex).

It localises to the nucleus. Its subcellular location is the chromosome. The protein localises to the cytoplasm. Functionally, non-essential DNA repair protein involved in DNA non-homologous end joining (NHEJ); participates in double-strand break (DSB) repair and V(D)J recombination. May act as a scaffold required for accumulation of the Ku heterodimer, composed of XRCC5/Ku80 and XRCC6/Ku70, at double-strand break sites and promote the assembly and/or stability of the NHEJ machinery. Involved in NHEJ by promoting the ligation of blunt-ended DNA ends. Together with NHEJ1/XLF, collaborates with DNA polymerase lambda (POLL) to promote joining of non-cohesive DNA ends. Constitutes a non-essential component of classical NHEJ: has a complementary but distinct function with NHEJ1/XLF in DNA repair. Able to restrict infection by herpesvirus 1 (HSV-1) via an unknown mechanism. The protein is Protein PAXX of Homo sapiens (Human).